We begin with the raw amino-acid sequence, 147 residues long: Small ribosomal subunit protein uS12 (147 aa).

Belongs to the universal ribosomal protein uS12 family. Part of the 30S ribosomal subunit.

Its function is as follows. With S4 and S5 plays an important role in translational accuracy. Located at the interface of the 30S and 50S subunits. This Thermofilum pendens (strain DSM 2475 / Hrk 5) protein is Small ribosomal subunit protein uS12.